A 226-amino-acid chain; its full sequence is ATP-dependent dethiobiotin synthetase BioD (226 aa).

Residue 12–17 participates in ATP binding; that stretch reads GVGKTV. A Mg(2+)-binding site is contributed by threonine 16. Lysine 37 is a catalytic residue. Threonine 41 contacts substrate. ATP contacts are provided by residues aspartate 49, 108 to 111, 169 to 170, and 197 to 199; these read EGAG, GS, and PAG. 2 residues coordinate Mg(2+): aspartate 49 and glutamate 108.

This sequence belongs to the dethiobiotin synthetase family. As to quaternary structure, homodimer. Mg(2+) is required as a cofactor.

Its subcellular location is the cytoplasm. It carries out the reaction (7R,8S)-7,8-diammoniononanoate + CO2 + ATP = (4R,5S)-dethiobiotin + ADP + phosphate + 3 H(+). It participates in cofactor biosynthesis; biotin biosynthesis; biotin from 7,8-diaminononanoate: step 1/2. Its function is as follows. Catalyzes a mechanistically unusual reaction, the ATP-dependent insertion of CO2 between the N7 and N8 nitrogen atoms of 7,8-diaminopelargonic acid (DAPA, also called 7,8-diammoniononanoate) to form a ureido ring. The chain is ATP-dependent dethiobiotin synthetase BioD from Mycobacterium bovis (strain ATCC BAA-935 / AF2122/97).